We begin with the raw amino-acid sequence, 131 residues long: Holo-[acyl-carrier-protein] synthase (131 aa).

Residues D8 and E59 each contribute to the Mg(2+) site.

It belongs to the P-Pant transferase superfamily. AcpS family. Requires Mg(2+) as cofactor.

Its subcellular location is the cytoplasm. It catalyses the reaction apo-[ACP] + CoA = holo-[ACP] + adenosine 3',5'-bisphosphate + H(+). In terms of biological role, transfers the 4'-phosphopantetheine moiety from coenzyme A to a Ser of acyl-carrier-protein. This Orientia tsutsugamushi (strain Ikeda) (Rickettsia tsutsugamushi) protein is Holo-[acyl-carrier-protein] synthase.